The chain runs to 682 residues: Potassium-transporting ATPase ATP-binding subunit (682 aa).

Transmembrane regions (helical) follow at residues 34 to 54 (PVMFIVWIGSLLTTCICIAMA), 62 to 82 (ALFSAAISGWLWVTVLFANFA), 219 to 239 (IALTILLIALTIVFLLATATL), and 254 to 274 (VLVALLVCLIPTTIGGLLSAI). Residue D307 is the 4-aspartylphosphate intermediate of the active site. ATP contacts are provided by residues D344, E348, 377 to 384 (FTAQSRMS), and K395. Residues D518 and D522 each contribute to the Mg(2+) site. Helical transmembrane passes span 588–608 (FAIIPAAFAATYPQLNALNIM), 616–636 (AILSAVIFNALIIVFLIPLAL), and 656–676 (IYGLGGLLVPFIGIKVIDLLL).

The protein belongs to the cation transport ATPase (P-type) (TC 3.A.3) family. Type IA subfamily. As to quaternary structure, the system is composed of three essential subunits: KdpA, KdpB and KdpC.

The protein resides in the cell inner membrane. It carries out the reaction K(+)(out) + ATP + H2O = K(+)(in) + ADP + phosphate + H(+). In terms of biological role, part of the high-affinity ATP-driven potassium transport (or Kdp) system, which catalyzes the hydrolysis of ATP coupled with the electrogenic transport of potassium into the cytoplasm. This subunit is responsible for energy coupling to the transport system and for the release of the potassium ions to the cytoplasm. The protein is Potassium-transporting ATPase ATP-binding subunit of Escherichia coli O17:K52:H18 (strain UMN026 / ExPEC).